The following is a 356-amino-acid chain: Fructose-1,6-bisphosphatase class 1 (356 aa).

Mg(2+) contacts are provided by E91, D113, L115, and D116. Substrate contacts are provided by residues 116-119 (DGSS) and N208. Mg(2+) is bound at residue E280.

This sequence belongs to the FBPase class 1 family. As to quaternary structure, homotetramer. The cofactor is Mg(2+).

The protein localises to the cytoplasm. The enzyme catalyses beta-D-fructose 1,6-bisphosphate + H2O = beta-D-fructose 6-phosphate + phosphate. It functions in the pathway carbohydrate biosynthesis; gluconeogenesis. This chain is Fructose-1,6-bisphosphatase class 1, found in Methylacidiphilum infernorum (isolate V4) (Methylokorus infernorum (strain V4)).